A 302-amino-acid polypeptide reads, in one-letter code: Beta-1,2-mannobiose phosphorylase (302 aa).

It belongs to the glycosyl hydrolase 130 family. In terms of assembly, monomer.

It carries out the reaction beta-D-mannopyranosyl-(1-&gt;2)-D-mannopyranose + phosphate = alpha-D-mannose 1-phosphate + D-mannose. It functions in the pathway nucleotide-sugar biosynthesis; GDP-alpha-D-mannose biosynthesis. Functionally, probably involved in a salvage pathway for GDP-D-mannose biosynthesis. Catalyzes the reversible phosphorolysis of 1,2-beta-oligomannan. In phosphorolytic reactions, prefers beta-1,2-mannobiose (beta-1,2-Man2) as substrate. Produces alpha-D-mannose 1-phosphate, which is the precursor of GDP-D-mannose. The sequence is that of Beta-1,2-mannobiose phosphorylase from Thermoanaerobacter sp. (strain X514).